Reading from the N-terminus, the 188-residue chain is Ribosome-recycling factor (188 aa).

This sequence belongs to the RRF family.

It is found in the cytoplasm. Responsible for the release of ribosomes from messenger RNA at the termination of protein biosynthesis. May increase the efficiency of translation by recycling ribosomes from one round of translation to another. In Cereibacter sphaeroides (strain ATCC 17025 / ATH 2.4.3) (Rhodobacter sphaeroides), this protein is Ribosome-recycling factor.